Consider the following 171-residue polypeptide: ATP synthase subunit b (171 aa).

The helical transmembrane segment at 12 to 34 (FGLNLNLFETNVINLAVVIFGLY) threads the bilayer.

The protein belongs to the ATPase B chain family. As to quaternary structure, F-type ATPases have 2 components, F(1) - the catalytic core - and F(0) - the membrane proton channel. F(1) has five subunits: alpha(3), beta(3), gamma(1), delta(1), epsilon(1). F(0) has four main subunits: a(1), b(1), b'(1) and c(10-14). The alpha and beta chains form an alternating ring which encloses part of the gamma chain. F(1) is attached to F(0) by a central stalk formed by the gamma and epsilon chains, while a peripheral stalk is formed by the delta, b and b' chains.

Its subcellular location is the cellular thylakoid membrane. F(1)F(0) ATP synthase produces ATP from ADP in the presence of a proton or sodium gradient. F-type ATPases consist of two structural domains, F(1) containing the extramembraneous catalytic core and F(0) containing the membrane proton channel, linked together by a central stalk and a peripheral stalk. During catalysis, ATP synthesis in the catalytic domain of F(1) is coupled via a rotary mechanism of the central stalk subunits to proton translocation. Functionally, component of the F(0) channel, it forms part of the peripheral stalk, linking F(1) to F(0). This is ATP synthase subunit b from Prochlorococcus marinus (strain MIT 9211).